The sequence spans 193 residues: Ion-translocating oxidoreductase complex subunit A (193 aa).

Helical transmembrane passes span 5–25 (LLIL…FLGL), 38–58 (AMGM…CSYL), 65–85 (APLG…AVVV), 102–122 (VLGI…VALL), 134–154 (ILYG…FSAM), and 171–191 (AIGM…TGLV).

The protein belongs to the NqrDE/RnfAE family. In terms of assembly, the complex is composed of six subunits: RnfA, RnfB, RnfC, RnfD, RnfE and RnfG.

The protein resides in the cell inner membrane. Its function is as follows. Part of a membrane-bound complex that couples electron transfer with translocation of ions across the membrane. In Hahella chejuensis (strain KCTC 2396), this protein is Ion-translocating oxidoreductase complex subunit A.